We begin with the raw amino-acid sequence, 190 residues long: Peptide deformylase (190 aa).

Fe cation is bound by residues Cys-106 and His-148. Residue Glu-149 is part of the active site. His-152 serves as a coordination point for Fe cation.

This sequence belongs to the polypeptide deformylase family. Requires Fe(2+) as cofactor.

It catalyses the reaction N-terminal N-formyl-L-methionyl-[peptide] + H2O = N-terminal L-methionyl-[peptide] + formate. Its function is as follows. Removes the formyl group from the N-terminal Met of newly synthesized proteins. Requires at least a dipeptide for an efficient rate of reaction. N-terminal L-methionine is a prerequisite for activity but the enzyme has broad specificity at other positions. The polypeptide is Peptide deformylase (Methylacidiphilum infernorum (isolate V4) (Methylokorus infernorum (strain V4))).